The following is a 241-amino-acid chain: 3-deoxy-D-manno-octulosonic acid kinase (241 aa).

Asp-171 is a catalytic residue.

This sequence belongs to the protein kinase superfamily. KdkA/RfaP family.

The protein localises to the cell inner membrane. It catalyses the reaction an alpha-Kdo-(2-&gt;6)-lipid IVA + ATP = a 4-O-phospho-alpha-Kdo-(2-&gt;6)-lipid IVA + ADP + H(+). The protein operates within bacterial outer membrane biogenesis; LPS core biosynthesis. In terms of biological role, catalyzes the ATP-dependent phosphorylation of the 3-deoxy-D-manno-octulosonic acid (Kdo) residue in Kdo-lipid IV(A) at the 4-OH position. The chain is 3-deoxy-D-manno-octulosonic acid kinase from Haemophilus influenzae (strain PittEE).